The chain runs to 264 residues: Ribosomal RNA small subunit methyltransferase A (264 aa).

The S-adenosyl-L-methionine site is built by asparagine 12, leucine 14, glycine 39, glutamate 60, aspartate 83, and asparagine 103.

This sequence belongs to the class I-like SAM-binding methyltransferase superfamily. rRNA adenine N(6)-methyltransferase family. RsmA subfamily.

The protein resides in the cytoplasm. The catalysed reaction is adenosine(1518)/adenosine(1519) in 16S rRNA + 4 S-adenosyl-L-methionine = N(6)-dimethyladenosine(1518)/N(6)-dimethyladenosine(1519) in 16S rRNA + 4 S-adenosyl-L-homocysteine + 4 H(+). Specifically dimethylates two adjacent adenosines (A1518 and A1519) in the loop of a conserved hairpin near the 3'-end of 16S rRNA in the 30S particle. May play a critical role in biogenesis of 30S subunits. The protein is Ribosomal RNA small subunit methyltransferase A of Syntrophotalea carbinolica (strain DSM 2380 / NBRC 103641 / GraBd1) (Pelobacter carbinolicus).